The sequence spans 162 residues: Solute carrier family 2, facilitated glucose transporter member 4 (162 aa).

Over 1–13 (TSIFETAGVGQPA) the chain is Extracellular. Residues 14-34 (YATIGAGVVNTVFTLVSVFLV) form a helical membrane-spanning segment. Asparagine 23 lines the D-glucose pocket. The Cytoplasmic portion of the chain corresponds to 35-43 (ERAGRRTLH). Residues 44 to 64 (LLGLAGMCGCAILMTIALLLL) form a helical membrane-spanning segment. Over 65-75 (ERLPAMSYVSI) the chain is Extracellular. Residues 76 to 96 (VAIFGFVAFFEIGPGPIPWFI) form a helical membrane-spanning segment. The D-glucose site is built by glutamate 86 and tryptophan 94. At 97-107 (VAELFSQGPRP) the chain is on the cytoplasmic side. The helical transmembrane segment at 108–128 (AAMAVAGFCNWTSNFIIGMGF) threads the bilayer. Over 129-135 (QYIAXAM) the chain is Extracellular. A helical membrane pass occupies residues 136–156 (GPYVFLLFAVLLLAFFIFTFL). Topologically, residues 157–162 (KVPETR) are cytoplasmic.

The protein belongs to the major facilitator superfamily. Sugar transporter (TC 2.A.1.1) family. Glucose transporter subfamily. Binds to DAXX. Interacts via its N-terminus with SRFBP1. Interacts with NDUFA9. Interacts with TRARG1; the interaction is required for proper SLC2A4 recycling after insulin stimulation. Sumoylated. Post-translationally, palmitoylated. Palmitoylation by ZDHHC7 controls the insulin-dependent translocation of GLUT4 to the plasma membrane.

It localises to the cell membrane. The protein localises to the endomembrane system. It is found in the cytoplasm. Its subcellular location is the perinuclear region. The catalysed reaction is D-glucose(out) = D-glucose(in). Functionally, insulin-regulated facilitative glucose transporter, which plays a key role in removal of glucose from circulation. Response to insulin is regulated by its intracellular localization: in the absence of insulin, it is efficiently retained intracellularly within storage compartments in muscle and fat cells. Upon insulin stimulation, translocates from these compartments to the cell surface where it transports glucose from the extracellular milieu into the cell. The sequence is that of Solute carrier family 2, facilitated glucose transporter member 4 from Canis lupus familiaris (Dog).